The sequence spans 55 residues: Spermatid nuclear transition protein 1 (55 aa).

Basic residues predominate over residues 1–42 (MSTSRKLKSHGMRRGKNRAPHKGVKRGGSKRKYRKGSLKSRK). The tract at residues 1-55 (MSTSRKLKSHGMRRGKNRAPHKGVKRGGSKRKYRKGSLKSRKRCDDANRNYRSHL) is disordered. Ser-9, Ser-37, and Ser-40 each carry phosphoserine.

The protein belongs to the nuclear transition protein 1 family. In terms of tissue distribution, testis.

It is found in the nucleus. The protein localises to the chromosome. In terms of biological role, plays a key role in the replacement of histones to protamine in the elongating spermatids of mammals. In condensing spermatids, loaded onto the nucleosomes, where it promotes the recruitment and processing of protamines, which are responsible for histone eviction. This chain is Spermatid nuclear transition protein 1 (TNP1), found in Sus scrofa (Pig).